A 175-amino-acid polypeptide reads, in one-letter code: ATP-dependent protease subunit HslV (175 aa).

The active site involves threonine 2. Na(+) is bound by residues alanine 156, cysteine 159, and threonine 162.

The protein belongs to the peptidase T1B family. HslV subfamily. As to quaternary structure, a double ring-shaped homohexamer of HslV is capped on each side by a ring-shaped HslU homohexamer. The assembly of the HslU/HslV complex is dependent on binding of ATP.

Its subcellular location is the cytoplasm. The catalysed reaction is ATP-dependent cleavage of peptide bonds with broad specificity.. Its activity is regulated as follows. Allosterically activated by HslU binding. In terms of biological role, protease subunit of a proteasome-like degradation complex believed to be a general protein degrading machinery. The protein is ATP-dependent protease subunit HslV of Rhizobium rhizogenes (strain K84 / ATCC BAA-868) (Agrobacterium radiobacter).